The sequence spans 445 residues: N-succinylarginine dihydrolase (445 aa).

Substrate contacts are provided by residues 19–28 (AGLSFGNVAS), Asn110, and 137–138 (HR). Residue Glu174 is part of the active site. Arg214 lines the substrate pocket. The active site involves His250. Substrate is bound by residues Asp252 and Asn363. Cys369 serves as the catalytic Nucleophile.

This sequence belongs to the succinylarginine dihydrolase family. Homodimer.

It catalyses the reaction N(2)-succinyl-L-arginine + 2 H2O + 2 H(+) = N(2)-succinyl-L-ornithine + 2 NH4(+) + CO2. It participates in amino-acid degradation; L-arginine degradation via AST pathway; L-glutamate and succinate from L-arginine: step 2/5. Its function is as follows. Catalyzes the hydrolysis of N(2)-succinylarginine into N(2)-succinylornithine, ammonia and CO(2). The chain is N-succinylarginine dihydrolase from Shewanella halifaxensis (strain HAW-EB4).